The primary structure comprises 187 residues: T-cell receptor-associated transmembrane adapter 1 (187 aa).

Over 1-7 (MSGSSGC) the chain is Extracellular. A helical; Signal-anchor for type III membrane protein transmembrane segment spans residues 8 to 28 (PFFLWGLLAFLGLALVISLIF). Over 29-187 (NISHYVEKQR…LIRAKREPVI (159 aa)) the chain is Cytoplasmic. Position 46 is a phosphoserine (S46). Phosphotyrosine is present on Y80. The interaction with PIK3R1 stretch occupies residues 80 to 83 (YEQM). A disordered region spans residues 117–138 (SVKGKRRRPRKQNTNVSDRGKD).

In terms of assembly, homodimer; disulfide-linked. Interacts with CD3Z. When phosphorylated, interacts with PIK3R1. In terms of processing, phosphorylated on tyrosines upon TCR activation. Present in T-cells (at protein level).

It localises to the cell membrane. In terms of biological role, stabilizes the TCR (T-cell antigen receptor)/CD3 complex at the surface of T-cells. The sequence is that of T-cell receptor-associated transmembrane adapter 1 (Trat1) from Mus musculus (Mouse).